Here is a 127-residue protein sequence, read N- to C-terminus: KP4 killer toxin (127 aa).

The first 22 residues, 1–22 (MQIINVVYSFLFAAAMLPVVHS), serve as a signal peptide directing secretion. 5 disulfides stabilise this stretch: C27/C100, C33/C103, C49/C89, C57/C82, and C66/C127.

As to quaternary structure, monomer.

The protein resides in the secreted. Functionally, this protein is lethal to sensitive cells of the same or related species. It specifically inhibits voltage-gated calcium channels. It inhibits cell growth and division by blocking calcium import. This is KP4 killer toxin (M2A) from Mycosarcoma maydis (Corn smut fungus).